The primary structure comprises 54 residues: Large ribosomal subunit protein eL37 (54 aa).

Cysteine 20, cysteine 23, cysteine 35, and cysteine 38 together coordinate Zn(2+). The C4-type zinc finger occupies 20 to 38 (CRRCGHHTYNVRTKRCSHC).

This sequence belongs to the eukaryotic ribosomal protein eL37 family. Zn(2+) is required as a cofactor.

Its function is as follows. Binds to the 23S rRNA. This Thermoplasma volcanium (strain ATCC 51530 / DSM 4299 / JCM 9571 / NBRC 15438 / GSS1) protein is Large ribosomal subunit protein eL37 (rpl37e).